Here is a 149-residue protein sequence, read N- to C-terminus: Histidine-containing phosphotransfer protein 2 (149 aa).

In terms of domain architecture, HPt spans 39-144 (TPGFVSEVVT…LQLEQQIQAY (106 aa)). His80 is modified (phosphohistidine).

Two-component system major event consists of a His-to-Asp phosphorelay between a sensor histidine kinase (HK) and a response regulator (RR). In plants, the His-to-Asp phosphorelay involves an additional intermediate named Histidine-containing phosphotransfer protein (HPt). This multistep phosphorelay consists of a His-Asp-His-Asp sequential transfer of a phosphate group between first a His and an Asp of the HK protein, followed by the transfer to a conserved His of the HPt protein and finally the transfer to an Asp in the receiver domain of the RR protein. As to expression, widely expressed.

The protein localises to the cytoplasm. It localises to the cytosol. It is found in the nucleus. In terms of biological role, functions as a two-component phosphorelay mediators between cytokinin sensor histidine kinases and response regulators (B-type ARRs). Plays an important role in propagating cytokinin signal transduction through the multistep His-to-Asp phosphorelay. Functions as a positive regulator of the cytokinin signaling pathway. May play a regulatory role in salt and drought tolerance during plant development. The chain is Histidine-containing phosphotransfer protein 2 from Oryza sativa subsp. japonica (Rice).